The sequence spans 89 residues: Small ribosomal subunit protein uS15 (89 aa).

This sequence belongs to the universal ribosomal protein uS15 family. In terms of assembly, part of the 30S ribosomal subunit. Forms a bridge to the 50S subunit in the 70S ribosome, contacting the 23S rRNA.

One of the primary rRNA binding proteins, it binds directly to 16S rRNA where it helps nucleate assembly of the platform of the 30S subunit by binding and bridging several RNA helices of the 16S rRNA. In terms of biological role, forms an intersubunit bridge (bridge B4) with the 23S rRNA of the 50S subunit in the ribosome. The protein is Small ribosomal subunit protein uS15 of Pelotomaculum thermopropionicum (strain DSM 13744 / JCM 10971 / SI).